A 459-amino-acid polypeptide reads, in one-letter code: Putrescine aminotransferase (459 aa).

Residues 150 to 151 (GT) and glutamine 274 each bind pyridoxal 5'-phosphate. At lysine 300 the chain carries N6-(pyridoxal phosphate)lysine. Threonine 332 contributes to the pyridoxal 5'-phosphate binding site.

Belongs to the class-III pyridoxal-phosphate-dependent aminotransferase family. Putrescine aminotransferase subfamily. It depends on pyridoxal 5'-phosphate as a cofactor.

It catalyses the reaction an alkane-alpha,omega-diamine + 2-oxoglutarate = an omega-aminoaldehyde + L-glutamate. It carries out the reaction putrescine + 2-oxoglutarate = 1-pyrroline + L-glutamate + H2O. The catalysed reaction is cadaverine + 2-oxoglutarate = 5-aminopentanal + L-glutamate. Its pathway is amine and polyamine degradation; putrescine degradation; 4-aminobutanal from putrescine (transaminase route): step 1/1. In terms of biological role, catalyzes the aminotransferase reaction from putrescine to 2-oxoglutarate, leading to glutamate and 4-aminobutanal, which spontaneously cyclizes to form 1-pyrroline. This is the first step in one of two pathways for putrescine degradation, where putrescine is converted into 4-aminobutanoate (gamma-aminobutyrate or GABA) via 4-aminobutanal. Also functions as a cadaverine transaminase in a a L-lysine degradation pathway to succinate that proceeds via cadaverine, glutarate and L-2-hydroxyglutarate. The protein is Putrescine aminotransferase of Escherichia coli O7:K1 (strain IAI39 / ExPEC).